The sequence spans 21 residues: Nitrilase (21 aa).

This sequence belongs to the carbon-nitrogen hydrolase superfamily. Nitrilase family.

The catalysed reaction is a nitrile + 2 H2O = a carboxylate + NH4(+). Its function is as follows. Acts on many kinds of nitrile compounds such as aliphatic, aromatic, and heterocyclic mononitriles or dinitriles. Prefers S-(-)-2-(4'-isobutylphenyl)-propionitrile to R-(+)-2-(4'-isobutylphenyl)-propionitrile as the substrate. The sequence is that of Nitrilase from Acinetobacter sp. (strain AK226).